We begin with the raw amino-acid sequence, 348 residues long: GDSL esterase/lipase At4g30140 (348 aa).

The first 28 residues, 1–28 (MVEGESKALWIILATVFAVAAVAPAVHG), serve as a signal peptide directing secretion. S40 serves as the catalytic Nucleophile. Active-site residues include D316 and H319. N342 carries N-linked (GlcNAc...) asparagine glycosylation.

This sequence belongs to the 'GDSL' lipolytic enzyme family.

The protein localises to the secreted. In Arabidopsis thaliana (Mouse-ear cress), this protein is GDSL esterase/lipase At4g30140.